Consider the following 311-residue polypeptide: HPr kinase/phosphorylase (311 aa).

Residues H139 and K160 contribute to the active site. 154–161 (GESGVGKS) lines the ATP pocket. S161 serves as a coordination point for Mg(2+). D178 functions as the Proton acceptor; for phosphorylation activity. Proton donor; for dephosphorylation activity in the catalytic mechanism. The segment at 202 to 211 (IEIRGIGILD) is important for the catalytic mechanism of both phosphorylation and dephosphorylation. A Mg(2+)-binding site is contributed by E203. R244 is an active-site residue. The interval 265–270 (PVRPGR) is important for the catalytic mechanism of dephosphorylation.

The protein belongs to the HPrK/P family. Homohexamer. Requires Mg(2+) as cofactor.

The catalysed reaction is [HPr protein]-L-serine + ATP = [HPr protein]-O-phospho-L-serine + ADP + H(+). The enzyme catalyses [HPr protein]-O-phospho-L-serine + phosphate + H(+) = [HPr protein]-L-serine + diphosphate. Its function is as follows. Catalyzes the ATP- as well as the pyrophosphate-dependent phosphorylation of a specific serine residue in HPr, a phosphocarrier protein of the phosphoenolpyruvate-dependent sugar phosphotransferase system (PTS). HprK/P also catalyzes the pyrophosphate-producing, inorganic phosphate-dependent dephosphorylation (phosphorolysis) of seryl-phosphorylated HPr (P-Ser-HPr). The two antagonistic activities of HprK/P are regulated by several intracellular metabolites, which change their concentration in response to the absence or presence of rapidly metabolisable carbon sources (glucose, fructose, etc.) in the growth medium. Therefore, by controlling the phosphorylation state of HPr, HPrK/P is a sensor enzyme that plays a major role in the regulation of carbon metabolism and sugar transport: it mediates carbon catabolite repression (CCR), and regulates PTS-catalyzed carbohydrate uptake and inducer exclusion. In Caldicellulosiruptor bescii (strain ATCC BAA-1888 / DSM 6725 / KCTC 15123 / Z-1320) (Anaerocellum thermophilum), this protein is HPr kinase/phosphorylase.